Reading from the N-terminus, the 299-residue chain is MAEFPASLLILNGKSTDNLPLREAIMLLREEGMTIHVRVTWEKGDAARYVEEARKLGVATVIAGGGDGTINEVSTALIQCEGDDIPALGILPLGTANDFATSVGIPEALDKALKLAIAGNAIAIDMAQVNKQTCFINMATGGFGTRITTETPEKLKAALGGVSYIIHGLMRMDTLQPDRCEIRGENFHWQGDALVIGIGNGRQAGGGQQLCPNALINDGLLQLRIFTGDEILPALVSTLKSDEDNPNIIEGASSWFDIQAPHEITFNLDGEPLSGQNFHIEILPAALRCRLPPDCPLLR.

The 132-residue stretch at 2–133 (AEFPASLLIL…IDMAQVNKQT (132 aa)) folds into the DAGKc domain. Residues T40, 66 to 72 (GDGTINE), and T95 each bind ATP. The Mg(2+) site is built by L215, D218, and L220. E271 serves as the catalytic Proton acceptor.

It belongs to the diacylglycerol/lipid kinase family. YegS lipid kinase subfamily. Mg(2+) is required as a cofactor. The cofactor is Ca(2+).

Its subcellular location is the cytoplasm. In terms of biological role, probably phosphorylates lipids; the in vivo substrate is unknown. This is Probable lipid kinase YegS from Escherichia coli (strain 55989 / EAEC).